A 214-amino-acid chain; its full sequence is Coiled-coil domain-containing protein 169 (214 aa).

Positions 29 to 154 form a coiled coil; that stretch reads DAVQLSIFEL…NERRTYLAEM (126 aa). Polar residues predominate over residues 155 to 170; the sequence is SQGSGLHQVSKRQQVD. Residues 155-214 are disordered; it reads SQGSGLHQVSKRQQVDQLPRMQENLVKTGRYNPAKQKTVSAKRGPVKKITRPNHLPELHP.

Belongs to the CCDC169 family.

This Homo sapiens (Human) protein is Coiled-coil domain-containing protein 169 (CCDC169).